The following is a 250-amino-acid chain: Probable aquaporin TIP-type (250 aa).

Helical transmembrane passes span 22-42 and 56-76; these read AGLAEFISTFIFVFAGSGSGI and AGLISASIAHAFALFVAVSVG. Residues 85–87 carry the NPA 1 motif; that stretch reads NPA. A run of 3 helical transmembrane segments spans residues 104 to 124, 138 to 158, and 170 to 190; these read IVYIIAQLLGSIVASALLVFV, VGVGPALVLEIVMTFGLVYTV, and IGIIAPIAIGFIVGANILVGG. The short motif at 198-200 is the NPA 2 element; that stretch reads NPA. The helical transmembrane segment at 218–238 threads the bilayer; the sequence is YWAGPLIGGGIAGLVYEVLFI.

Belongs to the MIP/aquaporin (TC 1.A.8) family. TIP (TC 1.A.8.10) subfamily.

The protein resides in the membrane. Its function is as follows. Aquaporins facilitate the transport of water and small neutral solutes across cell membranes. May have a role in buffering osmotic fluctations in the highly compartmented vacuole of arbuscule cells. This chain is Probable aquaporin TIP-type (AQP1), found in Medicago truncatula (Barrel medic).